The primary structure comprises 339 residues: MLRLDKFKKYSLTFGVTPIEHLPRLTAALGGKVQIYAKRDDCNSGLAMGGNKLRKLEYIVPDAIESNADTLVSIGGVQSNHTRMVAATAAKIGMKCVVVQESWVPHEDAVYDRVGNILMTRLMGADSRIVEDGFDIGIRKSWENAIQSVKDAGGKPYGIPAGASVHKFGGLGYVGFAEEVRAQEAEMGIKFDYIIVCVVTGSTQGGMIVGFAADGRADRVIGIDASGTPEQTRAQVRQIVDNTAELVELGRKVRDDEIVILNDYAYPAYGVPSAETNEAIRLAARTEAMITDPVYEGKSMQGMIDLVKKGYFPEGSKVLYAHLGGAPAINGYSYTYRNG.

N6-(pyridoxal phosphate)lysine is present on K52. S79 functions as the Nucleophile in the catalytic mechanism.

This sequence belongs to the ACC deaminase/D-cysteine desulfhydrase family. In terms of assembly, homotrimer. Requires pyridoxal 5'-phosphate as cofactor.

The enzyme catalyses 1-aminocyclopropane-1-carboxylate + H2O = 2-oxobutanoate + NH4(+). Its function is as follows. Catalyzes a cyclopropane ring-opening reaction, the irreversible conversion of 1-aminocyclopropane-1-carboxylate (ACC) to ammonia and alpha-ketobutyrate. Allows growth on ACC as a nitrogen source. This Bradyrhizobium sp. (strain ORS 278) protein is 1-aminocyclopropane-1-carboxylate deaminase.